The following is a 214-amino-acid chain: Adenylate kinase (214 aa).

10–15 (GAGKGT) is an ATP binding site. Positions 30–59 (STGDMFRAAIKAGTELGKQAKALMDEGKLV) are NMP. Residues T31, R36, 57 to 59 (KLV), 85 to 88 (GFPR), and Q92 each bind AMP. Residues 122 to 159 (GRRVHQASGRSYHIVYNPPKVEGKDDVTGEDLIIRADD) are LID. ATP contacts are provided by residues R123 and 132–133 (SY). The AMP site is built by R156 and R167. Q200 serves as a coordination point for ATP.

The protein belongs to the adenylate kinase family. As to quaternary structure, monomer.

Its subcellular location is the cytoplasm. The catalysed reaction is AMP + ATP = 2 ADP. The protein operates within purine metabolism; AMP biosynthesis via salvage pathway; AMP from ADP: step 1/1. Catalyzes the reversible transfer of the terminal phosphate group between ATP and AMP. Plays an important role in cellular energy homeostasis and in adenine nucleotide metabolism. It may be linked to the biosynthesis of lipopolysaccharide surface molecules, which are important for the pathogenesis of H.influenzae. The sequence is that of Adenylate kinase from Haemophilus influenzae (strain ATCC 51907 / DSM 11121 / KW20 / Rd).